A 498-amino-acid polypeptide reads, in one-letter code: Lysine--tRNA ligase (498 aa).

Residues Glu408 and Glu415 each contribute to the Mg(2+) site.

Belongs to the class-II aminoacyl-tRNA synthetase family. In terms of assembly, homodimer. Requires Mg(2+) as cofactor.

The protein resides in the cytoplasm. The enzyme catalyses tRNA(Lys) + L-lysine + ATP = L-lysyl-tRNA(Lys) + AMP + diphosphate. This chain is Lysine--tRNA ligase, found in Pediococcus pentosaceus (strain ATCC 25745 / CCUG 21536 / LMG 10740 / 183-1w).